The sequence spans 399 residues: Elongation factor Tu (399 aa).

One can recognise a tr-type G domain in the interval 10–209; that stretch reads KPHVNIGTIG…EVDAYIPTPE (200 aa). The G1 stretch occupies residues 19–26; that stretch reads GHVDHGKT. 19–26 contacts GTP; the sequence is GHVDHGKT. Residue Thr-26 participates in Mg(2+) binding. The interval 60–64 is G2; it reads GITIA. Residues 81 to 84 are G3; the sequence is DCPG. Residues 81 to 85 and 136 to 139 contribute to the GTP site; these read DCPGH and NKQD. A G4 region spans residues 136–139; it reads NKQD. Residues 174-176 form a G5 region; sequence SAL.

This sequence belongs to the TRAFAC class translation factor GTPase superfamily. Classic translation factor GTPase family. EF-Tu/EF-1A subfamily. Monomer.

The protein localises to the cytoplasm. The catalysed reaction is GTP + H2O = GDP + phosphate + H(+). Its function is as follows. GTP hydrolase that promotes the GTP-dependent binding of aminoacyl-tRNA to the A-site of ribosomes during protein biosynthesis. This Helicobacter pylori (strain ATCC 700392 / 26695) (Campylobacter pylori) protein is Elongation factor Tu.